The chain runs to 149 residues: Down syndrome critical region protein 9 (149 aa).

Positions 1 to 41 are disordered; it reads MGRICPVNSRARRLRARPGRPSGDSLPYHQLQGGAPRLWSP.

In Pan troglodytes (Chimpanzee), this protein is Down syndrome critical region protein 9 (DSCR9).